The primary structure comprises 915 residues: Kinesin-like protein KIN-10A (915 aa).

The span at 1 to 16 (MAPPTPSPRPGPPPTP) shows a compositional bias: pro residues. Disordered stretches follow at residues 1-28 (MAPPTPSPRPGPPPTPQAAMTTPLKTPA) and 34-53 (HFPAMTPRNGGGGGAAAGGT). In terms of domain architecture, Kinesin motor spans 56–391 (PVEVIGRIRN…LEYGAKAKCI (336 aa)). An ATP-binding site is contributed by 137–144 (GPTGSGKS). Positions 426-517 (NLQKENKLRE…QRLKEVEREK (92 aa)) form a coiled coil. The segment at 676–718 (PAKKAFGDENNEPAKQTFGDENKQQPAKRVFGDENKDPSAWGA) is disordered.

It belongs to the TRAFAC class myosin-kinesin ATPase superfamily. Kinesin family. KIN-10 subfamily.

This Oryza sativa subsp. japonica (Rice) protein is Kinesin-like protein KIN-10A.